The chain runs to 248 residues: Glucosamine-6-phosphate isomerase (248 aa).

Aspartate 68 acts as the Proton acceptor; for enolization step in catalysis. The active-site For ring-opening step is the glutamate 137. Catalysis depends on histidine 139, which acts as the Proton acceptor; for ring-opening step. Glutamate 144 functions as the For ring-opening step in the catalytic mechanism.

This sequence belongs to the glucosamine/galactosamine-6-phosphate isomerase family. Monomer.

The enzyme catalyses alpha-D-glucosamine 6-phosphate + H2O = beta-D-fructose 6-phosphate + NH4(+). In Candida albicans (strain SC5314 / ATCC MYA-2876) (Yeast), this protein is Glucosamine-6-phosphate isomerase (NAG1).